A 418-amino-acid polypeptide reads, in one-letter code: Diaminopimelate decarboxylase (418 aa).

The residue at position 53 (lysine 53) is an N6-(pyridoxal phosphate)lysine. Pyridoxal 5'-phosphate is bound by residues glycine 223 and 264-267 (EPGR). Arginine 267, arginine 303, and tyrosine 307 together coordinate substrate. Cysteine 338 serves as the catalytic Proton donor. Substrate-binding residues include glutamate 339 and tyrosine 374. Tyrosine 374 contributes to the pyridoxal 5'-phosphate binding site.

Belongs to the Orn/Lys/Arg decarboxylase class-II family. LysA subfamily. As to quaternary structure, homodimer. Pyridoxal 5'-phosphate serves as cofactor.

It carries out the reaction meso-2,6-diaminopimelate + H(+) = L-lysine + CO2. It functions in the pathway amino-acid biosynthesis; L-lysine biosynthesis via DAP pathway; L-lysine from DL-2,6-diaminopimelate: step 1/1. In terms of biological role, specifically catalyzes the decarboxylation of meso-diaminopimelate (meso-DAP) to L-lysine. The chain is Diaminopimelate decarboxylase from Buchnera aphidicola subsp. Baizongia pistaciae (strain Bp).